Reading from the N-terminus, the 293-residue chain is 16S rRNA (guanine(1405)-N(7))-methyltransferase (293 aa).

S-adenosyl-L-methionine contacts are provided by residues phenylalanine 47, 80–82 (HAS), arginine 86, alanine 111, aspartate 134, 160–161 (DL), leucine 176, and glutamine 185. A compositionally biased stretch (low complexity) spans 258–274 (GRPAPAEGAAEPGATRP). The segment at 258 to 293 (GRPAPAEGAAEPGATRPVVDVPATARPDADRVDPTG) is disordered. Residues 284–293 (PDADRVDPTG) show a composition bias toward basic and acidic residues.

It belongs to the methyltransferase superfamily. Aminoglycoside resistance family.

It carries out the reaction guanosine(1405) in 16S rRNA + S-adenosyl-L-methionine = N(7)-methylguanosine(1405) in 16S rRNA + S-adenosyl-L-homocysteine. Its function is as follows. Specifically methylates the N(7) position of guanine 1405 in 16S rRNA. Confers resistance to aminoglycosides. The polypeptide is 16S rRNA (guanine(1405)-N(7))-methyltransferase (fmrO) (Micromonospora olivasterospora).